Reading from the N-terminus, the 720-residue chain is Casein kinase II subunit alpha'-interacting protein (720 aa).

The span at 227-249 (LSSPSFTNRLQRNSFPPTSSSLE) shows a compositional bias: polar residues. 5 disordered regions span residues 227–250 (LSSP…SLEF), 264–303 (KPLK…SRRL), 333–366 (QNTA…SPKP), 602–640 (TQVQ…VDPT), and 678–698 (LRQS…KCLK). A compositionally biased stretch (low complexity) spans 608–626 (SSSSSSSCSSVSSSSSASS). Positions 630-640 (PSPPTPWVDPT) are enriched in pro residues. Over residues 687-698 (KPVRSHNSKCLK) the composition is skewed to basic residues.

As to quaternary structure, interacts (via C-terminus) with CSNK2A2. In terms of processing, phosphorylated by CK2 (casein kinase II), specifically by complexes containing catalytic subunit CSNK2A2. In terms of tissue distribution, expressed exclusively in testis (at protein level). Within testis, expressed mainly in the intermediate compartment of the seminiferous tubules with weaker expression in the basal and adluminal compartments.

The protein resides in the nucleus. Its function is as follows. May play a role in chromatin regulation of male germ cells. The polypeptide is Casein kinase II subunit alpha'-interacting protein (Mus musculus (Mouse)).